The chain runs to 393 residues: MAKESYKRDKPHVNIGTIGHVDHGKTTLTAAITSVLAKQGMATLREFSDIDKAPEERERGITISTAHVEYQTAKRHYAHIDCPGHADYIKNMITGAAQMDGAILVVAGTDGPMPQTREHILLARQVNVPALVVFLNKVDIADPELLELVEMELRELLTEYGFPGDDIPIIKGSALKALEGDPEAEKQIMELMDAVDSYIPQPVRDIDKPFLMPVEDVFSISGRGTVGTGRIERGRIKVGDEVEIVGIKPTAKSVVTGIEMFQKTLDEGQAGDNAGLLLRGVDKNALERGMVIAKPGSITPHTKFKAEVYILKKEEGGRHTPFFNGYRPQFYFRTTDVTGSVTLPEGVEMVMPGDNLSIDVELIAPIAMEESLRFAIREGGRTVGAGSVTKIVE.

The 194-residue stretch at 10-203 folds into the tr-type G domain; the sequence is KPHVNIGTIG…AVDSYIPQPV (194 aa). The tract at residues 19–26 is G1; sequence GHVDHGKT. Residue 19-26 participates in GTP binding; the sequence is GHVDHGKT. Residue T26 participates in Mg(2+) binding. The G2 stretch occupies residues 60–64; that stretch reads GITIS. The G3 stretch occupies residues 81–84; sequence DCPG. GTP is bound by residues 81-85 and 136-139; these read DCPGH and NKVD. The interval 136-139 is G4; it reads NKVD. The interval 173–175 is G5; sequence SAL.

This sequence belongs to the TRAFAC class translation factor GTPase superfamily. Classic translation factor GTPase family. EF-Tu/EF-1A subfamily. In terms of assembly, monomer.

The protein localises to the cytoplasm. It carries out the reaction GTP + H2O = GDP + phosphate + H(+). GTP hydrolase that promotes the GTP-dependent binding of aminoacyl-tRNA to the A-site of ribosomes during protein biosynthesis. In Chlorobaculum tepidum (strain ATCC 49652 / DSM 12025 / NBRC 103806 / TLS) (Chlorobium tepidum), this protein is Elongation factor Tu.